The sequence spans 215 residues: MKKITRIGIGGPVGSGKTAVIETITPRLIALGIKPLIITNDVVTTEDAKQVRRTLHGVLIEEKIVGVETGACPHTAVREDPSMNIAAVEELEDKYPDSDVILIESGGDNLTLTFSPALADFYIYVIDVAAGDKIPRKNGAGVCQSDILVINKKDLAPYVGASLEVMARDSKLMRGKKPFLFTNCKTGEGVDDLLQLILDMALFDVRTRPPLAASA.

Gly11–Thr18 provides a ligand contact to GTP.

This sequence belongs to the SIMIBI class G3E GTPase family. UreG subfamily. As to quaternary structure, homodimer. UreD, UreF and UreG form a complex that acts as a GTP-hydrolysis-dependent molecular chaperone, activating the urease apoprotein by helping to assemble the nickel containing metallocenter of UreC. The UreE protein probably delivers the nickel.

It localises to the cytoplasm. Functionally, facilitates the functional incorporation of the urease nickel metallocenter. This process requires GTP hydrolysis, probably effectuated by UreG. In Methylorubrum extorquens (strain PA1) (Methylobacterium extorquens), this protein is Urease accessory protein UreG 2.